The primary structure comprises 299 residues: N-acetylaspartate synthetase (299 aa).

The span at 44 to 57 (AAPGPAAAPPPAAG) shows a compositional bias: pro residues. The segment at 44 to 70 (AAPGPAAAPPPAAGPQPHGGTGGAGPP) is disordered. A compositionally biased stretch (gly residues) spans 60–70 (PHGGTGGAGPP). The helical transmembrane segment at 118–138 (YALLAALCFAVTRSLLLTCLV) threads the bilayer. The N-acetyltransferase domain maps to 143-280 (LALRYYYSRK…VLPGMTLSLA (138 aa)).

It belongs to the NAT8 family. Expressed in brain, kidney, liver and spleen. In brain, present in neurons but not in astrocytes (at protein level). Expressed in brain, thymus and spleen.

The protein localises to the cytoplasm. It localises to the microsome membrane. It is found in the mitochondrion membrane. Its subcellular location is the endoplasmic reticulum membrane. The enzyme catalyses L-aspartate + acetyl-CoA = N-acetyl-L-aspartate + CoA + H(+). Its activity is regulated as follows. Aminooxyacetic acid (AOAA) blocks its activity in both cytoplasm and mitochondria. In terms of biological role, catalyzes the synthesis of N-acetylaspartate acid (NAA) from L-aspartate and acetyl-CoA. Promotes dopamine uptake by regulating TNF-alpha expression. Attenuates methamphetamine-induced inhibition of dopamine uptake. The polypeptide is N-acetylaspartate synthetase (Nat8l) (Mus musculus (Mouse)).